Here is a 195-residue protein sequence, read N- to C-terminus: Imidazoleglycerol-phosphate dehydratase (195 aa).

It belongs to the imidazoleglycerol-phosphate dehydratase family.

Its subcellular location is the cytoplasm. It catalyses the reaction D-erythro-1-(imidazol-4-yl)glycerol 3-phosphate = 3-(imidazol-4-yl)-2-oxopropyl phosphate + H2O. The protein operates within amino-acid biosynthesis; L-histidine biosynthesis; L-histidine from 5-phospho-alpha-D-ribose 1-diphosphate: step 6/9. This chain is Imidazoleglycerol-phosphate dehydratase, found in Ruegeria sp. (strain TM1040) (Silicibacter sp.).